We begin with the raw amino-acid sequence, 223 residues long: NADH-quinone oxidoreductase subunit C (223 aa).

Belongs to the complex I 30 kDa subunit family. In terms of assembly, NDH-1 is composed of 14 different subunits. Subunits NuoB, C, D, E, F, and G constitute the peripheral sector of the complex.

It localises to the cell inner membrane. The catalysed reaction is a quinone + NADH + 5 H(+)(in) = a quinol + NAD(+) + 4 H(+)(out). NDH-1 shuttles electrons from NADH, via FMN and iron-sulfur (Fe-S) centers, to quinones in the respiratory chain. The immediate electron acceptor for the enzyme in this species is believed to be ubiquinone. Couples the redox reaction to proton translocation (for every two electrons transferred, four hydrogen ions are translocated across the cytoplasmic membrane), and thus conserves the redox energy in a proton gradient. This Hydrogenovibrio crunogenus (strain DSM 25203 / XCL-2) (Thiomicrospira crunogena) protein is NADH-quinone oxidoreductase subunit C.